We begin with the raw amino-acid sequence, 402 residues long: Oxysterol-binding protein 8 (402 aa).

Residues D328–E361 are a coiled coil.

The protein belongs to the OSBP family.

In Dictyostelium discoideum (Social amoeba), this protein is Oxysterol-binding protein 8 (osbH).